The sequence spans 340 residues: Glutamine synthetase (340 aa).

One can recognise a GS beta-grasp domain in the interval 3–82 (IKAEYIWIDG…LCEVLHTDLT (80 aa)). One can recognise a GS catalytic domain in the interval 88 to 340 (TRALLRPVAE…CTELARREQI (253 aa)). Residues Glu109, Glu111, Glu171, and Glu178 each coordinate Mg(2+). L-glutamate is bound at residue Glu276.

Belongs to the glutamine synthetase family. In terms of assembly, homooctamer and homotetramer. Requires Mg(2+) as cofactor.

Its subcellular location is the cytoplasm. It catalyses the reaction L-glutamate + NH4(+) + ATP = L-glutamine + ADP + phosphate + H(+). Its function is as follows. Catalyzes the ATP-dependent biosynthesis of glutamine from glutamate and ammonia. The polypeptide is Glutamine synthetase (Streptomyces hygroscopicus).